The primary structure comprises 297 residues: Nucleotide-binding protein Bphyt_0592 (297 aa).

8–15 (GISGSGKS) lines the ATP pocket. 57–60 (DARS) contributes to the GTP binding site.

This sequence belongs to the RapZ-like family.

Displays ATPase and GTPase activities. The sequence is that of Nucleotide-binding protein Bphyt_0592 from Paraburkholderia phytofirmans (strain DSM 17436 / LMG 22146 / PsJN) (Burkholderia phytofirmans).